The primary structure comprises 801 residues: Probable phosphoketolase (801 aa).

The protein belongs to the XFP family. Thiamine diphosphate is required as a cofactor.

This chain is Probable phosphoketolase, found in Bradyrhizobium diazoefficiens (strain JCM 10833 / BCRC 13528 / IAM 13628 / NBRC 14792 / USDA 110).